The chain runs to 318 residues: Pyrimidine-specific ribonucleoside hydrolase RihA (318 aa).

Residue His-240 is part of the active site.

The protein belongs to the IUNH family. RihA subfamily.

Hydrolyzes cytidine or uridine to ribose and cytosine or uracil, respectively. The chain is Pyrimidine-specific ribonucleoside hydrolase RihA from Shewanella oneidensis (strain ATCC 700550 / JCM 31522 / CIP 106686 / LMG 19005 / NCIMB 14063 / MR-1).